Here is a 330-residue protein sequence, read N- to C-terminus: tRNA pseudouridine synthase B (330 aa).

Residue D42 is the Nucleophile of the active site.

It belongs to the pseudouridine synthase TruB family. Type 1 subfamily.

The catalysed reaction is uridine(55) in tRNA = pseudouridine(55) in tRNA. Functionally, responsible for synthesis of pseudouridine from uracil-55 in the psi GC loop of transfer RNAs. The polypeptide is tRNA pseudouridine synthase B (Lactococcus lactis subsp. cremoris (strain MG1363)).